A 305-amino-acid polypeptide reads, in one-letter code: tRNA dimethylallyltransferase (305 aa).

8-15 is a binding site for ATP; that stretch reads GPTGTGKS. A substrate-binding site is contributed by 10–15; sequence TGTGKS.

Belongs to the IPP transferase family. Monomer. The cofactor is Mg(2+).

The catalysed reaction is adenosine(37) in tRNA + dimethylallyl diphosphate = N(6)-dimethylallyladenosine(37) in tRNA + diphosphate. Functionally, catalyzes the transfer of a dimethylallyl group onto the adenine at position 37 in tRNAs that read codons beginning with uridine, leading to the formation of N6-(dimethylallyl)adenosine (i(6)A). The sequence is that of tRNA dimethylallyltransferase from Mycobacterium sp. (strain JLS).